A 75-amino-acid chain; its full sequence is Mu-conotoxin GIIIA (75 aa).

An N-terminal signal peptide occupies residues 1–20; sequence MMSKLGVLLTICLLLFPLTA. The propeptide occupies 21–51; the sequence is LPMDGDEPANRPVERMQDNISSEQYPLFEKR. Cystine bridges form between Cys-54–Cys-66, Cys-55–Cys-71, and Cys-61–Cys-72. Pro-57 and Pro-58 each carry 4-hydroxyproline; partial. The residue at position 68 (Pro-68) is a 4-hydroxyproline. Residue Ala-73 is modified to Alanine amide.

Belongs to the conotoxin M superfamily. Hydroxylated; hydroxylations improve the ability to block Nav1.4/SCN4A sodium channels but does not affect folding. In terms of tissue distribution, expressed by the venom duct.

It is found in the secreted. Functionally, mu-conotoxins block voltage-gated sodium channels (Nav). This toxin potently blocks rat Nav1.4/SCN4A (IC(50)= 19-110 nM). It also moderately blocks rNav1.1/SCN1A (Kd=260 nM), rNav1.2/SCN2A (IC(50)=2.7-17.8 uM), and mNav1.6/SCN8A (IC(50)=680 nM). The inhibition is reversible. In vivo, induces paralysis to an isolated skeletal muscle preparation from frog (cutaneous pectoralis) within a few minutes. The protein is Mu-conotoxin GIIIA of Conus geographus (Geography cone).